Reading from the N-terminus, the 216-residue chain is Probable transaldolase (216 aa).

Catalysis depends on Lys-84, which acts as the Schiff-base intermediate with substrate.

This sequence belongs to the transaldolase family. Type 3B subfamily.

The protein resides in the cytoplasm. The catalysed reaction is D-sedoheptulose 7-phosphate + D-glyceraldehyde 3-phosphate = D-erythrose 4-phosphate + beta-D-fructose 6-phosphate. Its pathway is carbohydrate degradation; pentose phosphate pathway; D-glyceraldehyde 3-phosphate and beta-D-fructose 6-phosphate from D-ribose 5-phosphate and D-xylulose 5-phosphate (non-oxidative stage): step 2/3. Its function is as follows. Transaldolase is important for the balance of metabolites in the pentose-phosphate pathway. The protein is Probable transaldolase of Exiguobacterium sp. (strain ATCC BAA-1283 / AT1b).